The primary structure comprises 880 residues: Alanine--tRNA ligase (880 aa).

4 residues coordinate Zn(2+): His567, His571, Cys669, and His673.

The protein belongs to the class-II aminoacyl-tRNA synthetase family. Zn(2+) serves as cofactor.

Its subcellular location is the cytoplasm. It carries out the reaction tRNA(Ala) + L-alanine + ATP = L-alanyl-tRNA(Ala) + AMP + diphosphate. Its function is as follows. Catalyzes the attachment of alanine to tRNA(Ala) in a two-step reaction: alanine is first activated by ATP to form Ala-AMP and then transferred to the acceptor end of tRNA(Ala). Also edits incorrectly charged Ser-tRNA(Ala) and Gly-tRNA(Ala) via its editing domain. The chain is Alanine--tRNA ligase from Syntrophomonas wolfei subsp. wolfei (strain DSM 2245B / Goettingen).